We begin with the raw amino-acid sequence, 273 residues long: MAVRKFKPTTPGQRHKIIGTFEEITASVPEKSLVFGKRSTGGRNNVGKMTMRYMGGGHKRKYRLIDFKRNKDGVPAVVKTIEYDPNRSARIALLFYADGEKRYIIAPNGLQVGSTLVSGANAAPEIGNALPLENIPVGTVIHNIELRPGQGAALVRSAGNFAQLTSREGKYCVIKLPSGEVRQILSACKATIGSVGNSDHGLESSGKAGRTRWMGRRPRNRGVVMNPVDHPMGGGEGRASGGHPRSRTGLYAKGLKTRAPKKQSSKYIIERRK.

Positions 196–273 (GNSDHGLESS…SSKYIIERRK (78 aa)) are disordered. Basic residues-rich tracts occupy residues 209–220 (GRTRWMGRRPRN) and 255–264 (LKTRAPKKQS).

Belongs to the universal ribosomal protein uL2 family. Part of the 50S ribosomal subunit. Forms a bridge to the 30S subunit in the 70S ribosome.

Functionally, one of the primary rRNA binding proteins. Required for association of the 30S and 50S subunits to form the 70S ribosome, for tRNA binding and peptide bond formation. It has been suggested to have peptidyltransferase activity; this is somewhat controversial. Makes several contacts with the 16S rRNA in the 70S ribosome. This chain is Large ribosomal subunit protein uL2, found in Phocaeicola vulgatus (strain ATCC 8482 / DSM 1447 / JCM 5826 / CCUG 4940 / NBRC 14291 / NCTC 11154) (Bacteroides vulgatus).